Reading from the N-terminus, the 156-residue chain is Small ribosomal subunit protein uS7 (156 aa).

It belongs to the universal ribosomal protein uS7 family. In terms of assembly, part of the 30S ribosomal subunit. Contacts proteins S9 and S11.

Functionally, one of the primary rRNA binding proteins, it binds directly to 16S rRNA where it nucleates assembly of the head domain of the 30S subunit. Is located at the subunit interface close to the decoding center, probably blocks exit of the E-site tRNA. This Pasteurella multocida (strain Pm70) protein is Small ribosomal subunit protein uS7.